Here is a 425-residue protein sequence, read N- to C-terminus: Probable mannosyltransferase KTR2 (425 aa).

The Cytoplasmic portion of the chain corresponds to 1–13 (MQICKVFLTQVKK). The chain crosses the membrane as a helical; Signal-anchor for type II membrane protein span at residues 14–33 (LLFVSLLFCLIAQTCWLALV). Residues 34–89 (PYQRQLSLDSYFFRRSREVSSRYDFTRRRHMNQTLKLSSNTYNDEPLNKTKGIKNQ) are stem region. At 34–425 (PYQRQLSLDS…SGKYFLKHDS (392 aa)) the chain is on the lumenal side. N-linked (GlcNAc...) asparagine glycans are attached at residues Asn-65, Asn-81, Asn-92, and Asn-167. A catalytic region spans residues 90-425 (RENATLLMLV…SGKYFLKHDS (336 aa)). The Nucleophile role is filled by Glu-313.

The protein belongs to the glycosyltransferase 15 family.

The protein localises to the golgi apparatus membrane. It participates in protein modification; protein glycosylation. Its function is as follows. Involved in N-linked glycosylation. Transfers an alpha-D-mannosyl residue from GDP-mannose into lipid-linked oligosaccharide, forming an alpha-(1-&gt;2)-D-mannosyl-D-mannose linkage. The chain is Probable mannosyltransferase KTR2 (KTR2) from Saccharomyces cerevisiae (strain ATCC 204508 / S288c) (Baker's yeast).